A 245-amino-acid chain; its full sequence is Zinc finger protein 575 (245 aa).

The tract at residues 1–67 (MLERGAESAA…PPQRPHRCPD (67 aa)) is disordered. Over residues 36–49 (PSQSAPGPTASAGS) the composition is skewed to low complexity. The segment covering 52-63 (RPRRRPPPQRPH) has biased composition (basic residues). C2H2-type zinc fingers lie at residues 63 to 85 (HRCPDCDKAFSYPSKLATHRLAH), 91 to 113 (HPCPDCPKAFSYPSKLAAHRLTH), 119 to 141 (HPCPHCPKSFGHRSKLAAHLWTH), 147 to 169 (YPCPDCPKSFCYPSKLAAHRHTH), 177 to 199 (YPCPHCPKAFSFPSKLAAHRLCH), and 213 to 240 (HRCSSCGQAFGQRRLLLLHQRSHHQVEH).

It belongs to the krueppel C2H2-type zinc-finger protein family.

The protein resides in the nucleus. In terms of biological role, may be involved in transcriptional regulation. The chain is Zinc finger protein 575 (ZNF575) from Homo sapiens (Human).